The sequence spans 358 residues: Peptide chain release factor 1 (358 aa).

N5-methylglutamine is present on Gln233.

It belongs to the prokaryotic/mitochondrial release factor family. Methylated by PrmC. Methylation increases the termination efficiency of RF1.

It localises to the cytoplasm. Its function is as follows. Peptide chain release factor 1 directs the termination of translation in response to the peptide chain termination codons UAG and UAA. This chain is Peptide chain release factor 1, found in Listeria monocytogenes serotype 4b (strain CLIP80459).